A 405-amino-acid chain; its full sequence is Peroxisomal membrane protein PEX13 (405 aa).

Residues 1–11 show a composition bias toward pro residues; that stretch reads MASQPPPPPKP. The interval 1-71 is disordered; the sequence is MASQPPPPPK…SQQTGSNNVN (71 aa). Topologically, residues 1–136 are peroxisomal matrix; that stretch reads MASQPPPPPK…SSRGAFQSIE (136 aa). Residues 61 to 71 are compositionally biased toward polar residues; the sequence is PSQQTGSNNVN. The helical transmembrane segment at 137 to 157 threads the bilayer; sequence SIVHAFASVSMMMDATFSAVY. A targeting to peroxisomes region spans residues 147–235; sequence MMMDATFSAV…EDQATNSAKS (89 aa). Topologically, residues 158–176 are cytoplasmic; the sequence is NSFRAVLDVANHFSRLKIH. Residues 177 to 194 traverse the membrane as a helical segment; sequence FTKVFSAFALVRTIRYLY. The tract at residues 177-198 is interaction with PEX19; that stretch reads FTKVFSAFALVRTIRYLYRRLQ. The Peroxisomal matrix portion of the chain corresponds to 195–235; it reads RRLQWMMGLRRGSENEDLWAESEGTVACLSAEDQATNSAKS. Residues 236 to 256 form a helical membrane-spanning segment; the sequence is WPIFLFFAVILGGPYLIWKLL. The Cytoplasmic portion of the chain corresponds to 257-405; sequence STHNDEVTDN…TGKNGDKQDL (149 aa). The SH3 domain occupies 274 to 338; it reads DDHVVARAEY…PANYVKILGK (65 aa). A Phosphoserine modification is found at S356.

Belongs to the peroxin-13 family. In terms of assembly, interacts (via SH3 domain) with PEX14 (via SH3-binding motif); forming the PEX13-PEX14 docking complex. Interacts with PEX19.

The protein resides in the peroxisome membrane. Functionally, component of the PEX13-PEX14 docking complex, a translocon channel that specifically mediates the import of peroxisomal cargo proteins bound to PEX5 receptor. The PEX13-PEX14 docking complex forms a large import pore which can be opened to a diameter of about 9 nm. Mechanistically, PEX5 receptor along with cargo proteins associates with the PEX14 subunit of the PEX13-PEX14 docking complex in the cytosol, leading to the insertion of the receptor into the organelle membrane with the concomitant translocation of the cargo into the peroxisome matrix. Involved in the import of PTS1- and PTS2-type containing proteins. The sequence is that of Peroxisomal membrane protein PEX13 from Mus musculus (Mouse).